The chain runs to 133 residues: METNKLYECTVIIDGGLQDEAIAAAMEMVQKVITEKGGSISSVLDIGRRKTAYPIKKKTIGSYAHIEFTAATPVIAEIERVLRYEEVLLRYLIVHLTSPLLEMRKRVEKYSVVIGSPEDNVASETDAADKVAK.

It belongs to the bacterial ribosomal protein bS6 family.

Its function is as follows. Binds together with bS18 to 16S ribosomal RNA. The chain is Small ribosomal subunit protein bS6 from Chlorobium luteolum (strain DSM 273 / BCRC 81028 / 2530) (Pelodictyon luteolum).